Reading from the N-terminus, the 1886-residue chain is Highly reducing polyketide synthase (1886 aa).

In terms of domain architecture, Ketosynthase family 3 (KS3) spans 11 to 434 (TQDVAIVGLS…GANAHAVLDD (424 aa)). Residues C182, H317, and H357 each act as for beta-ketoacyl synthase activity in the active site. The malonyl-CoA:ACP transacylase (MAT) domain stretch occupies residues 483–568 (FLFSGQDQQS…VNNDLANTKK (86 aa)). Positions 616–750 (RSLIGAPQPS…GLLSIEYESS (135 aa)) are N-terminal hotdog fold. Residues 616 to 926 (RSLIGAPQPS…CTAISEATNP (311 aa)) form the PKS/mFAS DH domain. The interval 618–924 (LIGAPQPSYG…LHCTAISEAT (307 aa)) is dehydratase (DH) domain. H648 functions as the Proton acceptor; for dehydratase activity in the catalytic mechanism. The segment at 778-926 (HTTQSPKALY…CTAISEATNP (149 aa)) is C-terminal hotdog fold. D838 acts as the Proton donor; for dehydratase activity in catalysis. An enoylreductase (ER) domain region spans residues 1169 to 1480 (GMLDEIYFEA…AGKHMGKVAL (312 aa)). The tract at residues 1503-1681 (ATYVLVGGFG…VSLDLGLMRD (179 aa)) is catalytic ketoreductase (KRc) domain. The Carrier domain occupies 1802–1879 (DVTDLVLEIL…DLVDKIVAKS (78 aa)). The residue at position 1839 (S1839) is an O-(pantetheine 4'-phosphoryl)serine.

It participates in mycotoxin biosynthesis. Highly reducing polyketide synthase; part of the gene cluster that mediates the biosynthesis of the selective antifungal agent ascochitine, an o-quinone methide that plays a possible protective role against other microbial competitors in nature and is considered to be important for pathogenicity of legume-associated Didymella species. The pathway probably begins with the synthesis of a keto-aldehyde intermediate by the ascochitine non-reducing polyketide synthase pksAC from successive condensations of 4 malonyl-CoA units, presumably with a simple acetyl-CoA starter unit. Release of the keto-aldehyde intermediate is consistent with the presence of the C-terminal reductive release domain. The HR-PKS (orf7) probably makes a diketide starter unit which is passed to the non-reducing polyketide synthase pksAC for further extension, producing ascochital and ascochitine. The aldehyde dehydrogenase (orf1), the 2-oxoglutarate-dependent dioxygenase (orf3) and the dehydrogenase (orf9) are probably involved in subsequent oxidations of methyl groups to the carboxylic acid of the heterocyclic ring. The ascochitine gene cluster also includes a gene encoding a short peptide with a cupin domain (orf2) that is often found in secondary metabolite gene clusters and which function has still to be determined. This Didymella fabae (Leaf and pod spot disease fungus) protein is Highly reducing polyketide synthase.